Consider the following 324-residue polypeptide: Glyoxylate/hydroxypyruvate reductase B (324 aa).

Catalysis depends on residues Arg-237 and Glu-266. Catalysis depends on His-285, which acts as the Proton donor.

This sequence belongs to the D-isomer specific 2-hydroxyacid dehydrogenase family. GhrB subfamily. In terms of assembly, homodimer.

The protein resides in the cytoplasm. The catalysed reaction is glycolate + NADP(+) = glyoxylate + NADPH + H(+). The enzyme catalyses (R)-glycerate + NAD(+) = 3-hydroxypyruvate + NADH + H(+). It catalyses the reaction (R)-glycerate + NADP(+) = 3-hydroxypyruvate + NADPH + H(+). Its function is as follows. Catalyzes the NADPH-dependent reduction of glyoxylate and hydroxypyruvate into glycolate and glycerate, respectively. This Shigella sonnei (strain Ss046) protein is Glyoxylate/hydroxypyruvate reductase B.